The following is a 173-amino-acid chain: Large ribosomal subunit protein uL10 (173 aa).

This sequence belongs to the universal ribosomal protein uL10 family. Part of the ribosomal stalk of the 50S ribosomal subunit. The N-terminus interacts with L11 and the large rRNA to form the base of the stalk. The C-terminus forms an elongated spine to which L12 dimers bind in a sequential fashion forming a multimeric L10(L12)X complex.

Functionally, forms part of the ribosomal stalk, playing a central role in the interaction of the ribosome with GTP-bound translation factors. This Cupriavidus metallidurans (strain ATCC 43123 / DSM 2839 / NBRC 102507 / CH34) (Ralstonia metallidurans) protein is Large ribosomal subunit protein uL10.